The chain runs to 1155 residues: PAN2-PAN3 deadenylation complex catalytic subunit pan2 (1155 aa).

WD repeat units follow at residues 102 to 145 and 276 to 315; these read THED…DKLP and ANVS…HFNE. The segment at 316–452 is linker; that stretch reads MSKEVEFADV…GTKLNGEAED (137 aa). The USP domain maps to 453-822; the sequence is DPLLKYSNVE…VPCVLAYQVK (370 aa). An Exonuclease domain is found at 871 to 1049; sequence VALDTEFVDL…IEDARMALRL (179 aa). Positions 874, 876, 983, and 1042 each coordinate a divalent metal cation. The tract at residues 1095 to 1155 is disordered; sequence TAVTMQNNSG…GDFFGGSPLK (61 aa). Residues 1097–1106 show a composition bias toward polar residues; sequence VTMQNNSGRN. Residues 1107–1124 are compositionally biased toward low complexity; sequence TPSTPEVTAPTASAPTTP.

This sequence belongs to the peptidase C19 family. PAN2 subfamily. As to quaternary structure, forms a heterotrimer with an asymmetric homodimer of the regulatory subunit pan3 to form the poly(A)-nuclease (PAN) deadenylation complex. Requires a divalent metal cation as cofactor.

The protein localises to the cytoplasm. The catalysed reaction is Exonucleolytic cleavage of poly(A) to 5'-AMP.. Its activity is regulated as follows. Positively regulated by the regulatory subunit pan3. Its function is as follows. Catalytic subunit of the poly(A)-nuclease (PAN) deadenylation complex, one of two cytoplasmic mRNA deadenylases involved in mRNA turnover. PAN specifically shortens poly(A) tails of RNA and the activity is stimulated by poly(A)-binding protein pab1. PAN deadenylation is followed by rapid degradation of the shortened mRNA tails by the CCR4-NOT complex. Deadenylated mRNAs are then degraded by two alternative mechanisms, namely exosome-mediated 3'-5' exonucleolytic degradation, or deadenylation-dependent mRNA decaping and subsequent 5'-3' exonucleolytic degradation by xrn1. May also be involved in post-transcriptional maturation of mRNA poly(A) tails. In Aspergillus oryzae (strain ATCC 42149 / RIB 40) (Yellow koji mold), this protein is PAN2-PAN3 deadenylation complex catalytic subunit pan2.